We begin with the raw amino-acid sequence, 711 residues long: Constitutive ornithine decarboxylase (711 aa).

The residue at position 347 (K347) is an N6-(pyridoxal phosphate)lysine.

The protein belongs to the Orn/Lys/Arg decarboxylase class-I family. Pyridoxal 5'-phosphate serves as cofactor.

The catalysed reaction is L-ornithine + H(+) = putrescine + CO2. Its pathway is amine and polyamine biosynthesis; putrescine biosynthesis via L-ornithine pathway; putrescine from L-ornithine: step 1/1. In Escherichia coli (strain K12), this protein is Constitutive ornithine decarboxylase (speC).